Here is a 438-residue protein sequence, read N- to C-terminus: Trigger factor (438 aa).

A PPIase FKBP-type domain is found at glycine 170–proline 255.

Belongs to the FKBP-type PPIase family. Tig subfamily.

It is found in the cytoplasm. The enzyme catalyses [protein]-peptidylproline (omega=180) = [protein]-peptidylproline (omega=0). Involved in protein export. Acts as a chaperone by maintaining the newly synthesized protein in an open conformation. Functions as a peptidyl-prolyl cis-trans isomerase. In Oenococcus oeni (Leuconostoc oenos), this protein is Trigger factor (tig).